Here is a 463-residue protein sequence, read N- to C-terminus: Phosphoglucosamine mutase (463 aa).

Ser-102 serves as the catalytic Phosphoserine intermediate. Positions 102, 240, 242, and 244 each coordinate Mg(2+). The residue at position 102 (Ser-102) is a Phosphoserine.

The protein belongs to the phosphohexose mutase family. It depends on Mg(2+) as a cofactor. Activated by phosphorylation.

It carries out the reaction alpha-D-glucosamine 1-phosphate = D-glucosamine 6-phosphate. Catalyzes the conversion of glucosamine-6-phosphate to glucosamine-1-phosphate. The polypeptide is Phosphoglucosamine mutase (Mycobacterium leprae (strain Br4923)).